The following is a 1357-amino-acid chain: MAYSYTEKKRIRKDFSKLPDVMDVPYLLAIQLDSYREFLQAGATKEQFRDIGLHAAFKSVFPIISYSGNAALEYVGYRLGEPAFDVKECVLRGVTFAVPLRVKVRLIIFDRESSNKAIKDIKEQEVYMGEIPLMTENGTFIINGTERVIVSQLHRSPGVFFDHDRGKTHSSGKLLYSARIIPYRGSWLDFEFDPKDCVFVRIDRRRKLPASVLLRALGYSTEEILNAFYATNVFHIKGETLNLELVPQRLRGEVASIDIKDGSGKVIVEQGRRITARHINQLEKAGVTQLEVPFDYLIGRTIAKAIVHPATGEIIAECNTELTLDLLAKVAKAQVVRIETLYTNDIDCGPFISDTLKIDNTSNQLEALVEIYRMMRPGEPPTKEAAETLFGNLFFSAERYDLSAVGRMKFNRRIGRTEIEGPGVLSKEDIIDVLKTLVDIRNGKGIVDDIDHLGNRRVRCVGEMAENQFRVGLVRVERAVKERLSMAESEGLMPQDLINAKPVAAAIKEFFGSSQLSQFMDQNNPLSEITHKRRVSALGPGGLTRERAGFEVRDVHPTHYGRVCPIETPEGPNIGLINSLATYARTNKYGFLESPYRVVKDSLVTDEIVFLSAIEEADHVIAQASATLNEKGQLVDELVAVRHLNEFTVKAPEDVTLMDVSPKQVVSVAASLIPFLEHDDANRALMGSNMQRQAVPTLRADKPLVGTGMERNVARDSGVCVVARRGGVIDSVDASRVVVRVADDEVETGEAGVDIYNLTKYTRSNQNTCINQRPLVSKGDVVARGDILADGPSTDMGELALGQNMRVAFMPWNGFNFEDSICLSERVVQEDRFTTIHIQELTCVARDTKLGPEEITADIPNVGEAALNKLDEAGIVYVGAEVQAGDILVGKVTPKGETQLTPEEKLLRAIFGEKASDVKDTSLRVPTGTKGTVIDVQVFTRDGVERDSRALSIEKMQLDQIRKDLNEEFRIVEGATFERLRAALVGAKAEGGPALKKGTEITDDYLDGLERGQWFKLRMADDALNEQLEKAQAYISDRRQLLDDKFEDKKRKLQQGDDLAPGVLKIVKVYLAIKRRIQPGDKMAGRHGNKGVVSVIMPVEDMPHDANGTPVDIVLNPLGVPSRMNVGQILETHLGLAAKGLGEKINRMLEEQRKVAELRKFLHEIYNEIGGREENLDELGDNEILALAKNLRGGVPMATPVFDGAKEREIKAMLKLADLPESGQMRLFDGRTGNQFERPTTVGYMYMLKLNHLVDDKMHARSTGSYSLVTQQPLGGKAQFGGQRFGEMEVWALEAYGAAYTLQEMLTVKSDDVNGRTKMYKNIVDGDHRMEAGMPESFNVLIKEIRSLGIDIELETE.

It belongs to the RNA polymerase beta chain family. In terms of assembly, the RNAP catalytic core consists of 2 alpha, 1 beta, 1 beta' and 1 omega subunit. When a sigma factor is associated with the core the holoenzyme is formed, which can initiate transcription.

The enzyme catalyses RNA(n) + a ribonucleoside 5'-triphosphate = RNA(n+1) + diphosphate. Its function is as follows. DNA-dependent RNA polymerase catalyzes the transcription of DNA into RNA using the four ribonucleoside triphosphates as substrates. The protein is DNA-directed RNA polymerase subunit beta of Pseudomonas paraeruginosa (strain DSM 24068 / PA7) (Pseudomonas aeruginosa (strain PA7)).